Here is a 116-residue protein sequence, read N- to C-terminus: Large ribosomal subunit protein bL17 (116 aa).

It belongs to the bacterial ribosomal protein bL17 family. In terms of assembly, part of the 50S ribosomal subunit. Contacts protein L32.

The chain is Large ribosomal subunit protein bL17 from Wolinella succinogenes (strain ATCC 29543 / DSM 1740 / CCUG 13145 / JCM 31913 / LMG 7466 / NCTC 11488 / FDC 602W) (Vibrio succinogenes).